Consider the following 445-residue polypeptide: N-succinylarginine dihydrolase (445 aa).

Substrate is bound by residues 19–28 (AGLSFGNVAS), Asn-110, and 137–138 (HR). The active site involves Glu-174. Arg-214 contributes to the substrate binding site. His-250 is an active-site residue. Substrate contacts are provided by Asp-252 and Asn-363. Cys-369 (nucleophile) is an active-site residue.

Belongs to the succinylarginine dihydrolase family. In terms of assembly, homodimer.

It carries out the reaction N(2)-succinyl-L-arginine + 2 H2O + 2 H(+) = N(2)-succinyl-L-ornithine + 2 NH4(+) + CO2. The protein operates within amino-acid degradation; L-arginine degradation via AST pathway; L-glutamate and succinate from L-arginine: step 2/5. Its function is as follows. Catalyzes the hydrolysis of N(2)-succinylarginine into N(2)-succinylornithine, ammonia and CO(2). The polypeptide is N-succinylarginine dihydrolase (Shewanella halifaxensis (strain HAW-EB4)).